Reading from the N-terminus, the 136-residue chain is uncharacterized protein (136 aa).

This is an uncharacterized protein from Mycoplasma pneumoniae (strain ATCC 29342 / M129 / Subtype 1) (Mycoplasmoides pneumoniae).